Consider the following 746-residue polypeptide: Serine/threonine-protein kinase SMU1 (746 aa).

2 disordered regions span residues 1–138 (MSLV…DTLH) and 155–212 (QRSH…GSRN). 2 stretches are compositionally biased toward low complexity: residues 15-54 (SSAN…SSTT) and 85-105 (SVSS…PSSA). Composition is skewed to polar residues over residues 106–121 (LPWS…STAT), 128–138 (RSNTAGPDTLH), and 156–176 (RSHS…SSPT). Positions 194–203 (PSRDRERSRD) are enriched in basic and acidic residues. Residues 237–250 (ISTPYDPVHLTHVG) enclose the CRIB domain. The segment at 301–451 (GGSDVWKKMG…RRETKKSTIK (151 aa)) is disordered. Residues 370–380 (PPSNASTSSAD) are compositionally biased toward polar residues. The segment covering 414–430 (SPASRAPDAPAAVSAAS) has biased composition (low complexity). In terms of domain architecture, Protein kinase spans 472–723 (YRSLQKIGQG…ALGMLAHPFL (252 aa)). ATP contacts are provided by residues 478 to 486 (IGQGASGGV) and K501. The Proton acceptor role is filled by D591.

This sequence belongs to the protein kinase superfamily. STE Ser/Thr protein kinase family. STE20 subfamily.

Its subcellular location is the cytoplasm. It localises to the nucleus. It carries out the reaction L-seryl-[protein] + ATP = O-phospho-L-seryl-[protein] + ADP + H(+). The catalysed reaction is L-threonyl-[protein] + ATP = O-phospho-L-threonyl-[protein] + ADP + H(+). Its function is as follows. MAP4K component of the MAPK pathway required for the mating pheromone response and the regulation of cell polarity and cell cycle. Phosphorylates histone H2B to form H2BS10ph. This Mycosarcoma maydis (Corn smut fungus) protein is Serine/threonine-protein kinase SMU1 (SMU1).